The following is a 318-amino-acid chain: Beta-ketoacyl-[acyl-carrier-protein] synthase III (318 aa).

Active-site residues include cysteine 112 and histidine 245. The interval 246–250 (QANIR) is ACP-binding. Asparagine 275 is a catalytic residue.

This sequence belongs to the thiolase-like superfamily. FabH family. Homodimer.

Its subcellular location is the cytoplasm. The catalysed reaction is malonyl-[ACP] + acetyl-CoA + H(+) = 3-oxobutanoyl-[ACP] + CO2 + CoA. Its pathway is lipid metabolism; fatty acid biosynthesis. Its function is as follows. Catalyzes the condensation reaction of fatty acid synthesis by the addition to an acyl acceptor of two carbons from malonyl-ACP. Catalyzes the first condensation reaction which initiates fatty acid synthesis and may therefore play a role in governing the total rate of fatty acid production. Possesses both acetoacetyl-ACP synthase and acetyl transacylase activities. Its substrate specificity determines the biosynthesis of branched-chain and/or straight-chain of fatty acids. The polypeptide is Beta-ketoacyl-[acyl-carrier-protein] synthase III (Rickettsia conorii (strain ATCC VR-613 / Malish 7)).